A 1323-amino-acid polypeptide reads, in one-letter code: uncharacterized protein (1323 aa).

Positions 1–11 (MRELQGDDSSR) are enriched in basic and acidic residues. Disordered regions lie at residues 1-57 (MREL…SSYY) and 79-112 (IHESSTALSAQSNTAQDGDQLASSSTISKDHSET). Residues 12 to 21 (KSPPSDSVVK) show a composition bias toward low complexity. At serine 24 the chain carries Phosphoserine. Positions 27-40 (DYEHSLKSLQDERT) are enriched in basic and acidic residues. Polar residues-rich tracts occupy residues 42 to 57 (NYPNKQFNSENPSSYY) and 80 to 105 (HESSTALSAQSNTAQDGDQLASSSTI). WD repeat units follow at residues 271-314 (RHST…DRAI), 320-360 (GHTR…FPVN), 364-403 (DWHNGATQVKWNYKNPHILASSHGRLVRIWDDRYGSAPLH), 409-449 (ENIT…EEPE), 453-494 (TTDS…KEGP), and 502-551 (GHTD…LNSM). An RWD domain is found at 671 to 779 (EELSWIGQKY…SYLSGNLSVD (109 aa)). Positions 879 to 888 (SNSVADSDST) are enriched in polar residues. The interval 879-904 (SNSVADSDSTNYDDENSLNRGGTSES) is disordered. An RING-type; degenerate zinc finger spans residues 1265–1309 (CTFCCLSIHGLCIVCGLCLHVMHEDCYKEWFSNGDSISQSCSSGC).

It belongs to the WD repeat WDR59 family.

Functionally, may be involved in telomere capping. This is an uncharacterized protein from Schizosaccharomyces pombe (strain 972 / ATCC 24843) (Fission yeast).